Consider the following 105-residue polypeptide: MAFKHISIAQTLELLDKEDVVIADIRDPNSYQAGHIPGSEALSNANIAHFMMEKEFDQPIIIVCYHGMSSQGAASYLVEQGFEDVYSMDGGFTAWEAAYSEKVER.

One can recognise a Rhodanese domain in the interval 16 to 104; it reads DKEDVVIADI…WEAAYSEKVE (89 aa). Cysteine 64 acts as the Cysteine persulfide intermediate in catalysis.

The protein belongs to the GlpE family.

The protein resides in the cytoplasm. It carries out the reaction thiosulfate + hydrogen cyanide = thiocyanate + sulfite + 2 H(+). The catalysed reaction is thiosulfate + [thioredoxin]-dithiol = [thioredoxin]-disulfide + hydrogen sulfide + sulfite + 2 H(+). Its function is as follows. Transferase that catalyzes the transfer of sulfur from thiosulfate to thiophilic acceptors such as cyanide or dithiols. May function in a CysM-independent thiosulfate assimilation pathway by catalyzing the conversion of thiosulfate to sulfite, which can then be used for L-cysteine biosynthesis. In Pseudoalteromonas translucida (strain TAC 125), this protein is Thiosulfate sulfurtransferase GlpE.